Here is a 118-residue protein sequence, read N- to C-terminus: Small ribosomal subunit protein uS13 (118 aa).

The disordered stretch occupies residues 94–118; that stretch reads GLPVRGQRTRTNARTRKGPRKAIKK.

This sequence belongs to the universal ribosomal protein uS13 family. As to quaternary structure, part of the 30S ribosomal subunit. Forms a loose heterodimer with protein S19. Forms two bridges to the 50S subunit in the 70S ribosome.

Its function is as follows. Located at the top of the head of the 30S subunit, it contacts several helices of the 16S rRNA. In the 70S ribosome it contacts the 23S rRNA (bridge B1a) and protein L5 of the 50S subunit (bridge B1b), connecting the 2 subunits; these bridges are implicated in subunit movement. Contacts the tRNAs in the A and P-sites. In Thiobacillus denitrificans (strain ATCC 25259 / T1), this protein is Small ribosomal subunit protein uS13.